The primary structure comprises 274 residues: Penicillin-insensitive murein endopeptidase (274 aa).

Positions 1–19 (MKKTAIALLAWFVSSASLA) are cleaved as a signal peptide. 3 cysteine pairs are disulfide-bonded: cysteine 44/cysteine 265, cysteine 187/cysteine 235, and cysteine 216/cysteine 223. Residues histidine 110, histidine 113, aspartate 120, aspartate 147, histidine 150, and histidine 211 each contribute to the Zn(2+) site. The disordered stretch occupies residues 225 to 274 (DQPLPPPGDGCGAELQSWFEPPKPGTTKPEKKTPPPLPPSCQALLDEHVL).

It belongs to the peptidase M74 family. In terms of assembly, dimer. Zn(2+) serves as cofactor.

It localises to the periplasm. In terms of biological role, murein endopeptidase that cleaves the D-alanyl-meso-2,6-diamino-pimelyl amide bond that connects peptidoglycan strands. Likely plays a role in the removal of murein from the sacculus. The chain is Penicillin-insensitive murein endopeptidase from Salmonella agona (strain SL483).